The chain runs to 908 residues: MQRIAGITKMVTHRRWLGLLLLLLCVGYSHGMPHVLRFGGIFESIESGPSGAEELAFKFALNTINRNRTLLPNTTLTYDIQRINIHDSFEASRKACDQLSLGVAAIFGPSHSSSANAVQSICNALGVPHIQTKWKHQVSDNRDSFYVNLYPDFSSLSRAILDLVHFFKWKTVTVVYDDSTGLIRLQELIKAPSRYNIRLKIRQLPADTKDAKPLLKEMKRGKEFHVIFDCGHEMAAGILKQALAMGMMTEYYHYIFTTLDLFALDVEPYRYSGVNMTGFRILNTENSQVSSIIEKWSMERLQAPPKPDSGLLDGFMTTDAALMYDAVHVVAVAVQQSPQITVSSLQCNRHKPWRFGNRFMTLIKEAHWDGLTGRINFNRTNGLRTDFDLDVISLKEEGLEKIGTWDPASGLNMTENQKGKTANVTDSLSNRSLVVSTILEEPYVMFKKSDKPLYGNDRFEGYCVDLLRELAAILGFGYELRLVEDGRYGAQDESSGQWNGMVRELMDHKADLAVAPLAITYVREKVIDFSKPFMTLGISILYRKPNGTNPGVFSFLNPLSPDIWMYILLAYLGVSCVLFVIARFSPYEWYNPHPCNPDSDVVENNFTLLNSFWFGVGALMQQGSELMPKALSTRIVGGIWWFFTLIIISSYTANLAAFLTVERMESPIDSADDLAKQTKIEYGVVEDGSTMTFFKKTKISTYDKMWEFMSSRRHSVMVKSIEEGIERVLTSDYAFLMESTTIEFVTQRNCNLTQIGGLIDSKAYGVGTPMGSPYRDKITIAILQLQEEGKLHMMKEKWWRGNGCPEEENKEASALGVQNIGGIFIVLAAGLVLSVFVAVGEFLYKSKQNAQLEKRSFCSAMVDELRVSLKCQRRLKHKPQPPVMVKTDEVINMHTFNDRRLPGKETMA.

A signal peptide spans Met1–Gly31. Over Met32 to Pro561 the chain is Extracellular. 7 N-linked (GlcNAc...) asparagine glycosylation sites follow: Asn67, Asn73, Asn275, Asn378, Asn412, Asn423, and Asn430. Cys96 and Cys347 are oxidised to a cystine. Pro516, Ala518, and Arg523 together coordinate L-glutamate. N-linked (GlcNAc...) asparagine glycosylation occurs at Asn546. The chain crosses the membrane as a helical span at residues Asp562–Ala582. Residues Arg583–Gly638 lie on the Cytoplasmic side of the membrane. Residues Ile639–Leu659 traverse the membrane as a helical segment. Residues Thr660–Asn819 are Extracellular-facing. The L-glutamate site is built by Ser689, Thr690, and Glu738. A disulfide bond links Cys750 and Cys804. An N-linked (GlcNAc...) asparagine glycan is attached at Asn751. Residues Ile820–Gly840 form a helical membrane-spanning segment. Residues Glu841–Ala908 lie on the Cytoplasmic side of the membrane.

It belongs to the glutamate-gated ion channel (TC 1.A.10.1) family. GRIK2 subfamily. Homotetramer and heterotetramer with GRIK5. Tetramers may be formed by the dimerization of dimers.

It is found in the cell membrane. Its subcellular location is the postsynaptic cell membrane. The enzyme catalyses Ca(2+)(in) = Ca(2+)(out). It catalyses the reaction Na(+)(in) = Na(+)(out). With respect to regulation, cold receptor activity activated by temperatures between 10-19 degrees Celsius. Ionotropic glutamate receptor that functions as a cation-permeable ligand-gated ion channel, gated by L-glutamate and the glutamatergic agonist kainic acid. L-glutamate acts as an excitatory neurotransmitter at many synapses in the central nervous system. Binding of the excitatory neurotransmitter L-glutamate induces a conformation change, leading to the opening of the cation channel, and thereby converts the chemical signal to an electrical impulse. The receptor then desensitizes rapidly and enters a transient inactive state, characterized by the presence of bound agonist. In terms of biological role, independent of its ionotropic glutamate receptor activity, acts as a thermoreceptor conferring sensitivity to cold temperatures. Functions in dorsal root ganglion neurons. The protein is Glutamate receptor ionotropic, kainate 2 of Danio rerio (Zebrafish).